Here is a 365-residue protein sequence, read N- to C-terminus: Leu/Ile/Val/Thr-binding protein (365 aa).

The first 21 residues, 1–21 (MKGKTLLAGCIALSLSHMAFA), serve as a signal peptide directing secretion. Cys74 and Cys99 form a disulfide bridge.

The protein belongs to the leucine-binding protein family.

It localises to the periplasm. Functionally, this protein is a component of the leucine, isoleucine, valine, threonine transport system, which is one of the two periplasmic binding protein-dependent transport systems of the high-affinity transport of the branched-chain amino acids. The polypeptide is Leu/Ile/Val/Thr-binding protein (livJ) (Salmonella typhimurium (strain LT2 / SGSC1412 / ATCC 700720)).